The chain runs to 490 residues: MERWWFNSMLFKKEFERRCGLNKSMGSLGPIENTSEDPNLKMKNIHSCSNVDYLFGVKDIWNFISDDTFLVSDRNGDSYSIYFDIENQIFEVDNDHSFLSELESSFSSYRNSSYLNNGFRGEDPYYNSYMSYMYDTQYSWNNHINSCIDNYLQSQICIDTSIISGSESYGDSYIYRAICSGESLNSSENEGSSRRTRTKGSDLTIRESSNDLEVTQKYKHLWVQCENCYGLNYKKFLKSKMNICEQCGYHLKMSSSDRIELLIDPGTWDPMDEDMVSLDPIEFHSEEEPYKDRIDSYQRKTGLTEAVQTGIGQLNGIPVAIGVMDFQFMGGSMGSVVGEKITRLIEHAANQNLPLIIVCASGGARMQEGSLSLMQMAKISSALYDYQLNKKLFYVSILTSPTTGGVTASFGMLGDIIIAEPNAYIAFAGKRVIEQTLNKTVPEGSQAAEYLFQKGLFDLIVPRNLLKSVLSELFKLHAFFPLNQKSSKIK.

The interval 184-203 (LNSSENEGSSRRTRTKGSDL) is disordered. Residues 221–490 (LWVQCENCYG…PLNQKSSKIK (270 aa)) form the CoA carboxyltransferase N-terminal domain. C225, C228, C244, and C247 together coordinate Zn(2+). Residues 225-247 (CENCYGLNYKKFLKSKMNICEQC) form a C4-type zinc finger.

It belongs to the AccD/PCCB family. As to quaternary structure, acetyl-CoA carboxylase is a heterohexamer composed of biotin carboxyl carrier protein, biotin carboxylase and 2 subunits each of ACCase subunit alpha and ACCase plastid-coded subunit beta (accD). Zn(2+) is required as a cofactor. As to expression, RNA expressed in leaf, root, stem, and tuber; the least expression occurs in stems. RNA persists even in senescent leaves.

Its subcellular location is the plastid. It localises to the chloroplast stroma. The enzyme catalyses N(6)-carboxybiotinyl-L-lysyl-[protein] + acetyl-CoA = N(6)-biotinyl-L-lysyl-[protein] + malonyl-CoA. It functions in the pathway lipid metabolism; malonyl-CoA biosynthesis; malonyl-CoA from acetyl-CoA: step 1/1. Functionally, component of the acetyl coenzyme A carboxylase (ACC) complex. Biotin carboxylase (BC) catalyzes the carboxylation of biotin on its carrier protein (BCCP) and then the CO(2) group is transferred by the transcarboxylase to acetyl-CoA to form malonyl-CoA. The protein is Acetyl-coenzyme A carboxylase carboxyl transferase subunit beta, chloroplastic of Solanum tuberosum (Potato).